A 313-amino-acid chain; its full sequence is Acetaldehyde dehydrogenase (313 aa).

15-18 (SGNI) provides a ligand contact to NAD(+). Cysteine 133 functions as the Acyl-thioester intermediate in the catalytic mechanism. NAD(+) contacts are provided by residues 164-172 (SAGPGTRAN) and asparagine 289.

Belongs to the acetaldehyde dehydrogenase family.

It catalyses the reaction acetaldehyde + NAD(+) + CoA = acetyl-CoA + NADH + H(+). The polypeptide is Acetaldehyde dehydrogenase (Rhizobium rhizogenes (strain K84 / ATCC BAA-868) (Agrobacterium radiobacter)).